We begin with the raw amino-acid sequence, 210 residues long: ATP-dependent Clp protease proteolytic subunit (210 aa).

The Nucleophile role is filled by S106. H131 is a catalytic residue.

This sequence belongs to the peptidase S14 family. As to quaternary structure, fourteen ClpP subunits assemble into 2 heptameric rings which stack back to back to give a disk-like structure with a central cavity, resembling the structure of eukaryotic proteasomes.

The protein resides in the cytoplasm. It carries out the reaction Hydrolysis of proteins to small peptides in the presence of ATP and magnesium. alpha-casein is the usual test substrate. In the absence of ATP, only oligopeptides shorter than five residues are hydrolyzed (such as succinyl-Leu-Tyr-|-NHMec, and Leu-Tyr-Leu-|-Tyr-Trp, in which cleavage of the -Tyr-|-Leu- and -Tyr-|-Trp bonds also occurs).. In terms of biological role, cleaves peptides in various proteins in a process that requires ATP hydrolysis. Has a chymotrypsin-like activity. Plays a major role in the degradation of misfolded proteins. This is ATP-dependent Clp protease proteolytic subunit from Bradyrhizobium sp. (strain BTAi1 / ATCC BAA-1182).